A 324-amino-acid polypeptide reads, in one-letter code: Putative ribose-phosphate pyrophosphokinase 1 (324 aa).

Residues 43–45 (DGE) and 102–103 (RQ) contribute to the ATP site. Residue H136 coordinates Mg(2+). Residues D225 and 229–233 (NTGQT) contribute to the D-ribose 5-phosphate site.

It belongs to the ribose-phosphate pyrophosphokinase family. Class I subfamily. Homohexamer. Requires Mg(2+) as cofactor.

It is found in the cytoplasm. It carries out the reaction D-ribose 5-phosphate + ATP = 5-phospho-alpha-D-ribose 1-diphosphate + AMP + H(+). Its pathway is metabolic intermediate biosynthesis; 5-phospho-alpha-D-ribose 1-diphosphate biosynthesis; 5-phospho-alpha-D-ribose 1-diphosphate from D-ribose 5-phosphate (route I): step 1/1. Functionally, involved in the biosynthesis of the central metabolite phospho-alpha-D-ribosyl-1-pyrophosphate (PRPP) via the transfer of pyrophosphoryl group from ATP to 1-hydroxyl of ribose-5-phosphate (Rib-5-P). This is Putative ribose-phosphate pyrophosphokinase 1 from Enterococcus faecalis (strain ATCC 700802 / V583).